Reading from the N-terminus, the 312-residue chain is MKSDKPFLERYFYTPTLLQKGLIFALYPFSLIYQCIATFKRKTAKKHDFKIPIISVGNLIAGGSGKTPFILEIAPRYQEVAIISRGYQRNSKGLVVVSVKGKILVSQNTAGDEAYLLALNLKQASVIVSEKRELGILKALELGSKIVFLDDGFRFNFNQFNLLLKPKVPPYYPFCLPSGLYRESIKSYKEAHLVITEDKDYKRITSTTHPTKRMLLVTAIANPSRLNAFLPKEVVKKIYFKDHAPFNLKLLEKEFHKNNATSLLVTSKDLVKLQDCKLPLSVLDLRLEIDPKVLEKIDNYIFSYPYNTKEHL.

60–67 is an ATP binding site; the sequence is IAGGSGKT.

This sequence belongs to the LpxK family.

The catalysed reaction is a lipid A disaccharide + ATP = a lipid IVA + ADP + H(+). It functions in the pathway glycolipid biosynthesis; lipid IV(A) biosynthesis; lipid IV(A) from (3R)-3-hydroxytetradecanoyl-[acyl-carrier-protein] and UDP-N-acetyl-alpha-D-glucosamine: step 6/6. Transfers the gamma-phosphate of ATP to the 4'-position of a tetraacyldisaccharide 1-phosphate intermediate (termed DS-1-P) to form tetraacyldisaccharide 1,4'-bis-phosphate (lipid IVA). The chain is Tetraacyldisaccharide 4'-kinase from Helicobacter acinonychis (strain Sheeba).